Consider the following 550-residue polypeptide: Dihydroxy-acid dehydratase (550 aa).

Aspartate 78 is a Mg(2+) binding site. Residue cysteine 119 coordinates [2Fe-2S] cluster. Residues aspartate 120 and lysine 121 each coordinate Mg(2+). At lysine 121 the chain carries N6-carboxylysine. [2Fe-2S] cluster is bound at residue cysteine 191. Residue glutamate 440 participates in Mg(2+) binding. Catalysis depends on serine 466, which acts as the Proton acceptor.

It belongs to the IlvD/Edd family. As to quaternary structure, homodimer. [2Fe-2S] cluster serves as cofactor. The cofactor is Mg(2+).

It carries out the reaction (2R)-2,3-dihydroxy-3-methylbutanoate = 3-methyl-2-oxobutanoate + H2O. It catalyses the reaction (2R,3R)-2,3-dihydroxy-3-methylpentanoate = (S)-3-methyl-2-oxopentanoate + H2O. Its pathway is amino-acid biosynthesis; L-isoleucine biosynthesis; L-isoleucine from 2-oxobutanoate: step 3/4. The protein operates within amino-acid biosynthesis; L-valine biosynthesis; L-valine from pyruvate: step 3/4. Functions in the biosynthesis of branched-chain amino acids. Catalyzes the dehydration of (2R,3R)-2,3-dihydroxy-3-methylpentanoate (2,3-dihydroxy-3-methylvalerate) into 2-oxo-3-methylpentanoate (2-oxo-3-methylvalerate) and of (2R)-2,3-dihydroxy-3-methylbutanoate (2,3-dihydroxyisovalerate) into 2-oxo-3-methylbutanoate (2-oxoisovalerate), the penultimate precursor to L-isoleucine and L-valine, respectively. This chain is Dihydroxy-acid dehydratase, found in Methanococcus aeolicus (strain ATCC BAA-1280 / DSM 17508 / OCM 812 / Nankai-3).